Reading from the N-terminus, the 160-residue chain is Deoxyuridine 5'-triphosphate nucleotidohydrolase (160 aa).

Residues 72–74 (RSG), N85, and 89–91 (TID) each bind substrate.

This sequence belongs to the dUTPase family. Mg(2+) is required as a cofactor.

The enzyme catalyses dUTP + H2O = dUMP + diphosphate + H(+). It participates in pyrimidine metabolism; dUMP biosynthesis; dUMP from dCTP (dUTP route): step 2/2. This enzyme is involved in nucleotide metabolism: it produces dUMP, the immediate precursor of thymidine nucleotides and it decreases the intracellular concentration of dUTP so that uracil cannot be incorporated into DNA. In Methylocella silvestris (strain DSM 15510 / CIP 108128 / LMG 27833 / NCIMB 13906 / BL2), this protein is Deoxyuridine 5'-triphosphate nucleotidohydrolase.